A 132-amino-acid polypeptide reads, in one-letter code: Hemoglobin heart muscle subunit alpha-type (132 aa).

A Globin domain is found at 1 to 132; sequence GLSDSEKSAV…GEVGAILTSS (132 aa). Heme b contacts are provided by His-58 and His-83.

The protein belongs to the globin family. Monomer.

This hemoglobin may replace myocardial myoglobin in this amphibian species. The polypeptide is Hemoglobin heart muscle subunit alpha-type (Aquarana catesbeiana (American bullfrog)).